We begin with the raw amino-acid sequence, 98 residues long: uncharacterized protein (98 aa).

The protein belongs to the HesB/IscA family.

This is an uncharacterized protein from Staphylococcus aureus (strain MRSA252).